The primary structure comprises 336 residues: E3 ubiquitin-protein ligase RING2 (336 aa).

The residue at position 2 (S2) is an N-acetylserine. Positions 2-179 are interaction with HIP2; it reads SQAVQTNGTQ…AEDNGDSSHC (178 aa). Phosphoserine is present on S41. An RING-type zinc finger spans residues 51–91; that stretch reads CPICLDMLKNTMTTKECLHRFCADCIITALRSGNKECPTCR. Residues 93–98 are interaction with nucleosomes via an acidic patch on histone H2A and histone H2B; that stretch reads KLVSKR. K112 participates in a covalent cross-link: Glycyl lysine isopeptide (Lys-Gly) (interchain with G-Cter in ubiquitin). 2 positions are modified to phosphoserine: S143 and S168. Residues 157 to 213 form a disordered region; sequence QRGKKQQIENGSGAEDNGDSSHCSNASTHSNQEAGPSNKRTKTSDDSGLEPDNNNAA. A compositionally biased stretch (polar residues) spans 176-191; that stretch reads SSHCSNASTHSNQEAG. Residues K249 and K323 each participate in a glycyl lysine isopeptide (Lys-Gly) (interchain with G-Cter in SUMO2) cross-link.

As to quaternary structure, component of chromatin-associated Polycomb (PcG) complexes. Component of a number of PRC1-like complexes; these complexes contain either the polycomb group ring finger protein PCGF1, or PCGF2, or PCGF3, or BMI1, or PCGF5, or PCGF6. Distinct PRC1-like complexes are composed of a RING1 subunit (RING1B or RING1A), one of the six PCGF proteins (PCGF1, PCGF2, PCGF3, BMI1, PCGF5 or PCGF6), one PHC protein (PHC1, PHC2 or PHC3) and one of the CBX proteins (CBX2, CBX4, CBX6, CBX7 or CBX8). Part of a complex that contains RNF2, UB2D3 and BMI1; within that complex RNF2 and BMI1 form a tight heterodimer, where UB2D3 interacts only with RNF2. The complex composed of RNF2, UB2D3 and BMI1 binds nucleosomes, and has activity only with nucleosomal histone H2A. Part of a complex that contains PCGF5, RNF2 and UBE2D3. Part of a complex that contains AUTS2, PCGF5, RNF2, CSNK2B and RYBP. Interacts with CBX6 and CBX8. Interacts with PHC1, PCGF2, RYBP, CBX7, CBX4, CBX2, RNF1/RING1, BMI1 and PHC2. Interaction with RYBP and CBX7 is mutually exclusive; both compete for the same binding site on RNF2. Component of repressive BCOR complex containing a Polycomb group subcomplex at least composed of RYBP, PCGF1, BCOR and RING1. Interacts with CBX2 and PHC1. Interacts with CHTOP. Interacts with AURKB. Part of the E2F6.com-1 complex in G0 phase composed of E2F6, MGA, MAX, TFDP1, CBX3, BAT8, EUHMTASE1, RNF1/RING1, RNF2/RING2, MBLR, L3MBTL2 and YAF2. Component of some MLL1/MLL complex, at least composed of the core components KMT2A/MLL1, ASH2L, HCFC1/HCF1, WDR5 and RBBP5, as well as the facultative components BACC1, CHD8, E2F6, HSP70, INO80C, KANSL1, LAS1L, MAX, MCRS1, MGA, MYST1/MOF, PELP1, PHF20, PRP31, RING2, RUVB1/TIP49A, RUVB2/TIP49B, SENP3, TAF1, TAF4, TAF6, TAF7, TAF9 and TEX10. Interacts with RYBP, HIP2 and TFCP2. Interacts with NUPR1. Interacts with SAMD7 in a PHC2-dependent manner. In terms of processing, monoubiquitinated, by auto-ubiquitination. Polyubiquitinated in the presence of UBE2D3 (in vitro).

Its subcellular location is the nucleus. It localises to the cytoplasm. The protein resides in the chromosome. It carries out the reaction S-ubiquitinyl-[E2 ubiquitin-conjugating enzyme]-L-cysteine + [acceptor protein]-L-lysine = [E2 ubiquitin-conjugating enzyme]-L-cysteine + N(6)-ubiquitinyl-[acceptor protein]-L-lysine.. It participates in protein modification; protein ubiquitination. Functionally, E3 ubiquitin-protein ligase that mediates monoubiquitination of 'Lys-119' of histone H2A (H2AK119Ub), thereby playing a central role in histone code and gene regulation. H2AK119Ub gives a specific tag for epigenetic transcriptional repression and participates in X chromosome inactivation of female mammals. May be involved in the initiation of both imprinted and random X inactivation. Essential component of a Polycomb group (PcG) multiprotein PRC1-like complex, a complex class required to maintain the transcriptionally repressive state of many genes, including Hox genes, throughout development. PcG PRC1 complex acts via chromatin remodeling and modification of histones, rendering chromatin heritably changed in its expressibility. E3 ubiquitin-protein ligase activity is enhanced by BMI1/PCGF4. Acts as the main E3 ubiquitin ligase on histone H2A of the PRC1 complex, while RING1 may rather act as a modulator of RNF2/RING2 activity. Plays a role in the transcriptional repression of genes that are required for pluripotency in embryonic stem cells, thereby contributing to differentiation of the ectodermal and endodermal germ layers. Association with the chromosomal DNA is cell-cycle dependent. In resting B- and T-lymphocytes, interaction with AURKB leads to block its activity, thereby maintaining transcription in resting lymphocytes. Also acts as a negative regulator of autophagy by mediating ubiquitination of AMBRA1, leading to its subsequent degradation. The sequence is that of E3 ubiquitin-protein ligase RING2 (RNF2) from Pongo abelii (Sumatran orangutan).